Here is a 610-residue protein sequence, read N- to C-terminus: UvrABC system protein C (610 aa).

One can recognise a GIY-YIG domain in the interval 13 to 91 (HLPGVYRMYD…IKENQPKYNV (79 aa)). The UVR domain occupies 201–236 (GQVIEHLVQKMENAAQELDFEAAARFRDQIQSVRAV).

It belongs to the UvrC family. As to quaternary structure, interacts with UvrB in an incision complex.

The protein localises to the cytoplasm. In terms of biological role, the UvrABC repair system catalyzes the recognition and processing of DNA lesions. UvrC both incises the 5' and 3' sides of the lesion. The N-terminal half is responsible for the 3' incision and the C-terminal half is responsible for the 5' incision. The polypeptide is UvrABC system protein C (Actinobacillus pleuropneumoniae serotype 3 (strain JL03)).